Reading from the N-terminus, the 440-residue chain is F-box protein pof12 (440 aa).

The 47-residue stretch at 8–54 folds into the F-box domain; it reads KNPASIFSHETLLHVLNDLSAHDLAALERVSRSWNSIVRRSSVWHNL.

As to quaternary structure, interacts with skp1.

The protein resides in the nucleus. The sequence is that of F-box protein pof12 (pof12) from Schizosaccharomyces pombe (strain 972 / ATCC 24843) (Fission yeast).